Consider the following 421-residue polypeptide: MTKDIAQVMAEVGRKAKAAAAPLSIATNEQKNKALNAAADAILEARADILEANRLDLANAEKNGMAASFVDRLTLNEARIDAIAEGIRAIATLPDPVGEVIAEWDRPNGLHIERVRTPLGVIGVIYESRPNVTADAGALCLKAGNAVILRGGSDSAHSSAAIYKALVKGLEAANLPADAIQIVPVTDRAAVGEMLKGLGGAIDVIVPRGGKSLVARVQSEARVPVFAHLEGICHLYIDKSADLDMARRIALDAKMRRTGICGAAETLLVDRAVASTHLAPILGDLAAGGCEIRGSAEVLALYPAAKPATEEDWSTEYLDAIISVALVDGISGAIDHINRYSSHHTEAIVAEDAQTVARFFNEIDSAILLHNASTQFADGGEFGMGAEIGIATGKMHARGPVGVEQLTSFKYRVRGSGQVRG.

The protein belongs to the gamma-glutamyl phosphate reductase family.

Its subcellular location is the cytoplasm. The catalysed reaction is L-glutamate 5-semialdehyde + phosphate + NADP(+) = L-glutamyl 5-phosphate + NADPH + H(+). It functions in the pathway amino-acid biosynthesis; L-proline biosynthesis; L-glutamate 5-semialdehyde from L-glutamate: step 2/2. Catalyzes the NADPH-dependent reduction of L-glutamate 5-phosphate into L-glutamate 5-semialdehyde and phosphate. The product spontaneously undergoes cyclization to form 1-pyrroline-5-carboxylate. In Brucella melitensis biotype 1 (strain ATCC 23456 / CCUG 17765 / NCTC 10094 / 16M), this protein is Gamma-glutamyl phosphate reductase.